Here is a 507-residue protein sequence, read N- to C-terminus: ATP synthase subunit alpha, chloroplastic (507 aa).

170–177 is an ATP binding site; that stretch reads GDRQTGKT.

Belongs to the ATPase alpha/beta chains family. In terms of assembly, F-type ATPases have 2 components, CF(1) - the catalytic core - and CF(0) - the membrane proton channel. CF(1) has five subunits: alpha(3), beta(3), gamma(1), delta(1), epsilon(1). CF(0) has four main subunits: a, b, b' and c.

The protein localises to the plastid. The protein resides in the chloroplast thylakoid membrane. It catalyses the reaction ATP + H2O + 4 H(+)(in) = ADP + phosphate + 5 H(+)(out). In terms of biological role, produces ATP from ADP in the presence of a proton gradient across the membrane. The alpha chain is a regulatory subunit. The protein is ATP synthase subunit alpha, chloroplastic of Nicotiana tomentosiformis (Tobacco).